A 145-amino-acid chain; its full sequence is Bacilliredoxin MW1318 (145 aa).

This sequence belongs to the bacilliredoxin family.

The chain is Bacilliredoxin MW1318 from Staphylococcus aureus (strain MW2).